Consider the following 144-residue polypeptide: Augurin-B (144 aa).

An N-terminal signal peptide occupies residues 1–18; sequence MSLHSLCVPTILLISVLS. The propeptide occupies 19–68; that stretch reads ICLSSGGSSDSKLHRILIKRDAKEIESRPKAYISVQQSKAKEFLSGLHRT. The segment at 109–144 is disordered; it reads RSNDQGRQHHHDENAPMSQQDPRYNRHGANVNYDYY. A compositionally biased stretch (basic and acidic residues) spans 112 to 122; the sequence is DQGRQHHHDEN.

Belongs to the augurin family.

The protein localises to the secreted. Its subcellular location is the cytoplasm. The protein resides in the apical cell membrane. In terms of biological role, probable hormone. Required for the proper formation of the central nervous system by attenuating cell proliferation during development. The protein is Augurin-B of Danio rerio (Zebrafish).